Here is a 727-residue protein sequence, read N- to C-terminus: Procollagen-lysine,2-oxoglutarate 5-dioxygenase 1 (727 aa).

A signal peptide spans methionine 1–alanine 18. N-linked (GlcNAc...) asparagine glycans are attached at residues asparagine 163, asparagine 197, and asparagine 538. The Fe2OG dioxygenase domain maps to glutamine 636–proline 727. Residues histidine 656 and aspartate 658 each coordinate Fe cation. A glycan (N-linked (GlcNAc...) asparagine) is linked at asparagine 686. Histidine 708 lines the Fe cation pocket. Residue arginine 718 is part of the active site.

As to quaternary structure, homodimer. Identified in a complex with P3H3 and P3H4. The cofactor is Fe(2+). L-ascorbate serves as cofactor.

Its subcellular location is the rough endoplasmic reticulum membrane. It carries out the reaction L-lysyl-[collagen] + 2-oxoglutarate + O2 = (5R)-5-hydroxy-L-lysyl-[collagen] + succinate + CO2. In terms of biological role, part of a complex composed of PLOD1, P3H3 and P3H4 that catalyzes hydroxylation of lysine residues in collagen alpha chains and is required for normal assembly and cross-linkling of collagen fibrils. Forms hydroxylysine residues in -Xaa-Lys-Gly- sequences in collagens. These hydroxylysines serve as sites of attachment for carbohydrate units and are essential for the stability of the intermolecular collagen cross-links. The chain is Procollagen-lysine,2-oxoglutarate 5-dioxygenase 1 (PLOD1) from Homo sapiens (Human).